Reading from the N-terminus, the 38-residue chain is Large ribosomal subunit protein bL36 (38 aa).

It belongs to the bacterial ribosomal protein bL36 family.

The polypeptide is Large ribosomal subunit protein bL36 (rpmJ) (Streptococcus pneumoniae serotype 4 (strain ATCC BAA-334 / TIGR4)).